Reading from the N-terminus, the 200-residue chain is uncharacterized protein (200 aa).

The chain crosses the membrane as a helical span at residues 7-29 (FFFLFSFISHAMMLTGLIGSSSF).

It is found in the membrane. This is an uncharacterized protein from Saccharomyces cerevisiae (strain ATCC 204508 / S288c) (Baker's yeast).